Reading from the N-terminus, the 75-residue chain is U6-lycotoxin-Ls1e (75 aa).

Positions 1-21 (MKLLLFTALVLVVISLIEVEA) are cleaved as a signal peptide. Positions 22–25 (ENER) are excised as a propeptide.

Belongs to the neurotoxin 19 (CSTX) family. 06 (U6-Lctx) subfamily. Post-translationally, contains 4 disulfide bonds. In terms of tissue distribution, expressed by the venom gland.

The protein localises to the secreted. The chain is U6-lycotoxin-Ls1e from Lycosa singoriensis (Wolf spider).